A 192-amino-acid chain; its full sequence is Probable nicotinate-nucleotide adenylyltransferase (192 aa).

Belongs to the NadD family.

It carries out the reaction nicotinate beta-D-ribonucleotide + ATP + H(+) = deamido-NAD(+) + diphosphate. It participates in cofactor biosynthesis; NAD(+) biosynthesis; deamido-NAD(+) from nicotinate D-ribonucleotide: step 1/1. Catalyzes the reversible adenylation of nicotinate mononucleotide (NaMN) to nicotinic acid adenine dinucleotide (NaAD). This Rhizobium etli (strain CIAT 652) protein is Probable nicotinate-nucleotide adenylyltransferase.